The primary structure comprises 412 residues: Protein ALF (412 aa).

2 disordered regions span residues 1 to 47 (MDPE…PLPP) and 154 to 234 (GLSE…GISE). Pro residues predominate over residues 31-47 (PPQPPPPPLPPPQPLPP). Residues 187-196 (MRQRRRKKVV) show a composition bias toward basic residues. Acidic residues predominate over residues 206 to 221 (MEEDEDTEEGQEDNED). 3 consecutive DNA-binding regions follow at residues 237–241 (REHPF), 306–313 (NKPKMRHY), and 377–380 (YVPT).

It belongs to the FLO/LFY family. In terms of tissue distribution, expressed in the floral meristem and also in the vegetative meristem.

The protein localises to the nucleus. In terms of biological role, probable transcription factor required for the specification of floral meristem identity. In Petunia hybrida (Petunia), this protein is Protein ALF (ALF).